Consider the following 159-residue polypeptide: Riboflavin kinase (159 aa).

38-43 (GLGEGR) serves as a coordination point for CDP. 2 residues coordinate Mg(2+): Thr67 and Asn69. Residues Thr126 and Glu134 each coordinate FMN. 139-142 (HKLR) is a binding site for CDP.

Belongs to the archaeal riboflavin kinase family. Mg(2+) is required as a cofactor.

It catalyses the reaction riboflavin + CTP = CDP + FMN + H(+). Its pathway is cofactor biosynthesis; FMN biosynthesis; FMN from riboflavin (CTP route): step 1/1. Functionally, catalyzes the CTP-dependent phosphorylation of riboflavin (vitamin B2) to form flavin mononucleotide (FMN). The protein is Riboflavin kinase of Sulfolobus acidocaldarius (strain ATCC 33909 / DSM 639 / JCM 8929 / NBRC 15157 / NCIMB 11770).